The primary structure comprises 699 residues: Elongation factor G (699 aa).

Positions 8–288 (EDYRNFGIMA…AVVDYLPSPL (281 aa)) constitute a tr-type G domain. GTP contacts are provided by residues 17-24 (AHIDAGKT), 86-90 (DTPGH), and 140-143 (NKMD).

The protein belongs to the TRAFAC class translation factor GTPase superfamily. Classic translation factor GTPase family. EF-G/EF-2 subfamily.

The protein resides in the cytoplasm. Its function is as follows. Catalyzes the GTP-dependent ribosomal translocation step during translation elongation. During this step, the ribosome changes from the pre-translocational (PRE) to the post-translocational (POST) state as the newly formed A-site-bound peptidyl-tRNA and P-site-bound deacylated tRNA move to the P and E sites, respectively. Catalyzes the coordinated movement of the two tRNA molecules, the mRNA and conformational changes in the ribosome. The polypeptide is Elongation factor G (Rhizobium etli (strain CIAT 652)).